We begin with the raw amino-acid sequence, 157 residues long: Vesicle transport protein SFT2B (157 aa).

At Met1 the chain carries N-acetylmethionine. Topologically, residues 1–36 (MDKLKKVLSGQDTEDRSGLSEVVESSSLSWSTRIKG) are cytoplasmic. Residue Ser9 is modified to Phosphoserine. Residues 37-57 (FIVCFALGILCSLLGTLLLWV) form a helical membrane-spanning segment. Residues 58-61 (SRKG) are Lumenal-facing. A helical membrane pass occupies residues 62-82 (LFAVFYTLGNITSIGSTMFLM). At 83–96 (GPLKQLKRMFEPTR) the chain is on the cytoplasmic side. Residues 97–117 (LIATILVLLFFVLTLCSAFLW) traverse the membrane as a helical segment. Residues 118-120 (NKG) are Lumenal-facing. Residues 121–141 (LALIFCILQSLALTWYSLSYI) form a helical membrane-spanning segment. The Cytoplasmic portion of the chain corresponds to 142–157 (PYARDAVKKCFAVCLT).

The protein belongs to the SFT2 family.

It localises to the membrane. May be involved in fusion of retrograde transport vesicles derived from an endocytic compartment with the Golgi complex. This chain is Vesicle transport protein SFT2B, found in Rattus norvegicus (Rat).